A 445-amino-acid polypeptide reads, in one-letter code: Phosphoglucosamine mutase (445 aa).

The active-site Phosphoserine intermediate is the S102. Mg(2+) contacts are provided by S102, D241, D243, and D245. S102 bears the Phosphoserine mark.

Belongs to the phosphohexose mutase family. Mg(2+) serves as cofactor. Post-translationally, activated by phosphorylation.

It catalyses the reaction alpha-D-glucosamine 1-phosphate = D-glucosamine 6-phosphate. Its function is as follows. Catalyzes the conversion of glucosamine-6-phosphate to glucosamine-1-phosphate. In Hahella chejuensis (strain KCTC 2396), this protein is Phosphoglucosamine mutase.